Reading from the N-terminus, the 210-residue chain is Interleukin-6 (210 aa).

The signal sequence occupies residues 1–25 (MNSLSTSAFSPVAFSLGLLLVMATA). An intrachain disulfide couples C72 to C78. S81 is modified (phosphoserine). C101 and C111 form a disulfide bridge.

Belongs to the IL-6 superfamily. Component of a hexamer of two molecules each of IL6, IL6R and IL6ST; first binds to IL6R to associate with the signaling subunit IL6ST. Interacts with IL6R (via the N-terminal ectodomain); this interaction may be affected by IL6R-binding with SORL1, hence decreasing IL6 cis signaling. Interacts with SORL1 (via the N-terminal ectodomain); this interaction leads to IL6 internalization and lysosomal degradation. May form a trimeric complex with the soluble SORL1 ectodomain and soluble IL6R receptor; this interaction might stabilize circulating IL6, hence promoting IL6 trans signaling.

The protein resides in the secreted. Its function is as follows. Cytokine with a wide variety of biological functions in immunity, tissue regeneration, and metabolism. Binds to IL6R, then the complex associates to the signaling subunit IL6ST/gp130 to trigger the intracellular IL6-signaling pathway. The interaction with the membrane-bound IL6R and IL6ST stimulates 'classic signaling', whereas the binding of IL6 and soluble IL6R to IL6ST stimulates 'trans-signaling'. Alternatively, 'cluster signaling' occurs when membrane-bound IL6:IL6R complexes on transmitter cells activate IL6ST receptors on neighboring receiver cells. In terms of biological role, IL6 is a potent inducer of the acute phase response. Rapid production of IL6 contributes to host defense during infection and tissue injury, but excessive IL6 synthesis is involved in disease pathology. In the innate immune response, is synthesized by myeloid cells, such as macrophages and dendritic cells, upon recognition of pathogens through toll-like receptors (TLRs) at the site of infection or tissue injury. In the adaptive immune response, is required for the differentiation of B cells into immunoglobulin-secreting cells. Plays a major role in the differentiation of CD4(+) T cell subsets. Essential factor for the development of T follicular helper (Tfh) cells that are required for the induction of germinal-center formation. Required to drive naive CD4(+) T cells to the Th17 lineage. Also required for proliferation of myeloma cells and the survival of plasmablast cells. Acts as an essential factor in bone homeostasis and on vessels directly or indirectly by induction of VEGF, resulting in increased angiogenesis activity and vascular permeability. Induces, through 'trans-signaling' and synergistically with IL1B and TNF, the production of VEGF. Involved in metabolic controls, is discharged into the bloodstream after muscle contraction increasing lipolysis and improving insulin resistance. 'Trans-signaling' in central nervous system also regulates energy and glucose homeostasis. Mediates, through GLP-1, crosstalk between insulin-sensitive tissues, intestinal L cells and pancreatic islets to adapt to changes in insulin demand. Also acts as a myokine. Plays a protective role during liver injury, being required for maintenance of tissue regeneration. Also has a pivotal role in iron metabolism by regulating HAMP/hepcidin expression upon inflammation or bacterial infection. Through activation of IL6ST-YAP-NOTCH pathway, induces inflammation-induced epithelial regeneration. The polypeptide is Interleukin-6 (IL6) (Mustela putorius furo (European domestic ferret)).